The chain runs to 393 residues: S-adenosylmethionine synthase (393 aa).

His-16 serves as a coordination point for ATP. Position 18 (Asp-18) interacts with Mg(2+). Glu-44 contributes to the K(+) binding site. 2 residues coordinate L-methionine: Glu-57 and Gln-100. The tract at residues 100–110 (QSQDIAQGVDK) is flexible loop. Residues 167–169 (DAK), 238–239 (RF), Asp-247, 253–254 (RK), Ala-270, and Lys-274 each bind ATP. Asp-247 is a binding site for L-methionine. Residue Lys-278 participates in L-methionine binding.

The protein belongs to the AdoMet synthase family. In terms of assembly, homotetramer; dimer of dimers. Mg(2+) is required as a cofactor. K(+) serves as cofactor.

The protein resides in the cytoplasm. The enzyme catalyses L-methionine + ATP + H2O = S-adenosyl-L-methionine + phosphate + diphosphate. It participates in amino-acid biosynthesis; S-adenosyl-L-methionine biosynthesis; S-adenosyl-L-methionine from L-methionine: step 1/1. Functionally, catalyzes the formation of S-adenosylmethionine (AdoMet) from methionine and ATP. The overall synthetic reaction is composed of two sequential steps, AdoMet formation and the subsequent tripolyphosphate hydrolysis which occurs prior to release of AdoMet from the enzyme. This is S-adenosylmethionine synthase from Delftia acidovorans (strain DSM 14801 / SPH-1).